A 100-amino-acid chain; its full sequence is Integration host factor subunit beta (100 aa).

The interval Leu53–Ser100 is disordered. Basic and acidic residues predominate over residues Pro82 to Asn91.

This sequence belongs to the bacterial histone-like protein family. In terms of assembly, heterodimer of an alpha and a beta chain.

This protein is one of the two subunits of integration host factor, a specific DNA-binding protein that functions in genetic recombination as well as in transcriptional and translational control. In Alkalilimnicola ehrlichii (strain ATCC BAA-1101 / DSM 17681 / MLHE-1), this protein is Integration host factor subunit beta.